Reading from the N-terminus, the 356-residue chain is UDP-N-acetylglucosamine--N-acetylmuramyl-(pentapeptide) pyrophosphoryl-undecaprenol N-acetylglucosamine transferase (356 aa).

UDP-N-acetyl-alpha-D-glucosamine-binding positions include 12 to 14 (TGG), asparagine 124, arginine 163, serine 188, isoleucine 242, 261 to 266 (ALTVSE), and glutamine 287.

The protein belongs to the glycosyltransferase 28 family. MurG subfamily.

The protein resides in the cell inner membrane. It catalyses the reaction di-trans,octa-cis-undecaprenyl diphospho-N-acetyl-alpha-D-muramoyl-L-alanyl-D-glutamyl-meso-2,6-diaminopimeloyl-D-alanyl-D-alanine + UDP-N-acetyl-alpha-D-glucosamine = di-trans,octa-cis-undecaprenyl diphospho-[N-acetyl-alpha-D-glucosaminyl-(1-&gt;4)]-N-acetyl-alpha-D-muramoyl-L-alanyl-D-glutamyl-meso-2,6-diaminopimeloyl-D-alanyl-D-alanine + UDP + H(+). It participates in cell wall biogenesis; peptidoglycan biosynthesis. Cell wall formation. Catalyzes the transfer of a GlcNAc subunit on undecaprenyl-pyrophosphoryl-MurNAc-pentapeptide (lipid intermediate I) to form undecaprenyl-pyrophosphoryl-MurNAc-(pentapeptide)GlcNAc (lipid intermediate II). The protein is UDP-N-acetylglucosamine--N-acetylmuramyl-(pentapeptide) pyrophosphoryl-undecaprenol N-acetylglucosamine transferase of Pseudomonas fluorescens (strain SBW25).